The primary structure comprises 252 residues: Isoprenyl transferase 2 (252 aa).

The active site involves Asp26. Residue Asp26 participates in Mg(2+) binding. Substrate contacts are provided by residues Gly27–Arg30, Trp31, Arg39, His43, and Ser71–Glu73. Asn74 functions as the Proton acceptor in the catalytic mechanism. Residues Trp75, Arg77, Arg194, and Arg200–Ser202 contribute to the substrate site. Glu213 provides a ligand contact to Mg(2+).

Belongs to the UPP synthase family. As to quaternary structure, homodimer. The cofactor is Mg(2+).

In terms of biological role, catalyzes the condensation of isopentenyl diphosphate (IPP) with allylic pyrophosphates generating different type of terpenoids. The polypeptide is Isoprenyl transferase 2 (Bradyrhizobium diazoefficiens (strain JCM 10833 / BCRC 13528 / IAM 13628 / NBRC 14792 / USDA 110)).